Reading from the N-terminus, the 198-residue chain is 7-methyl-GTP pyrophosphatase (198 aa).

Asp-69 serves as the catalytic Proton acceptor.

Belongs to the Maf family. YceF subfamily. A divalent metal cation serves as cofactor.

The protein localises to the cytoplasm. The enzyme catalyses N(7)-methyl-GTP + H2O = N(7)-methyl-GMP + diphosphate + H(+). In terms of biological role, nucleoside triphosphate pyrophosphatase that hydrolyzes 7-methyl-GTP (m(7)GTP). May have a dual role in cell division arrest and in preventing the incorporation of modified nucleotides into cellular nucleic acids. The polypeptide is 7-methyl-GTP pyrophosphatase (Yersinia pestis bv. Antiqua (strain Antiqua)).